Consider the following 753-residue polypeptide: Probable TonB-dependent siderophore receptor PiuA (753 aa).

An N-terminal signal peptide occupies residues 1–35 (MSRQSTDTAVSSQRLLASAIGVAITAIAAPQAAQA). Residues 79 to 185 (PLLDTPKTVT…TGGSLNLISK (107 aa)) form the TBDR plug domain. The 564-residue stretch at 190–753 (DNFTDAGFTW…TALLGVNFHF (564 aa)) folds into the TBDR beta-barrel domain. Cysteine 420 and cysteine 430 are joined by a disulfide.

This sequence belongs to the TonB-dependent receptor family.

The protein resides in the cell outer membrane. Functionally, involved in the initial step of iron uptake by binding iron chelating siderophores, thereby allowing extraction of iron from the environment. Probably involved in the transport of siderophores, including host catecholamines such as dopamine. In Pseudomonas aeruginosa (strain ATCC 15692 / DSM 22644 / CIP 104116 / JCM 14847 / LMG 12228 / 1C / PRS 101 / PAO1), this protein is Probable TonB-dependent siderophore receptor PiuA.